A 503-amino-acid polypeptide reads, in one-letter code: uncharacterized protein (503 aa).

It belongs to the Mg-chelatase subunits D/I family. ComM subfamily.

This is an uncharacterized protein from Mycobacterium tuberculosis (strain CDC 1551 / Oshkosh).